A 231-amino-acid polypeptide reads, in one-letter code: Histone H1 (231 aa).

Residues 1–17 (MSDPAIEVAPVPVASPA) are compositionally biased toward low complexity. Disordered regions lie at residues 1 to 44 (MSDP…PVSD) and 124 to 231 (TKKV…AKKA). Positions 38–112 (THPPVSDMIV…GASGSFKLPA (75 aa)) constitute an H15 domain. Basic residues-rich tracts occupy residues 145–171 (KVKK…KTTK), 178–213 (PTKK…KAKK), and 221–231 (KAAKKPSAKKA).

It belongs to the histone H1/H5 family.

The protein localises to the nucleus. The protein resides in the chromosome. Histones H1 are necessary for the condensation of nucleosome chains into higher-order structures. The polypeptide is Histone H1 (Chironomus thummi thummi (Midge)).